The primary structure comprises 110 residues: Parvalbumin alpha (110 aa).

Ser-2 carries the N-acetylserine modification. A phosphoserine mark is found at Ser-2, Ser-8, and Ser-24. EF-hand domains follow at residues 39–74 and 78–110; these read KSADDVKKVFHILDKDKSGFIEEDELGSILKGFSSD and LSAKETKTLMAAGDKDGDGKIGVEEFSTLVAES. Ca(2+) contacts are provided by Asp-52, Asp-54, Ser-56, Phe-58, Glu-60, and Glu-63. Ser-66 is modified (phosphoserine). 5 residues coordinate Ca(2+): Asp-91, Asp-93, Asp-95, Lys-97, and Glu-102.

In muscle, parvalbumin is thought to be involved in relaxation after contraction. It binds two calcium ions. The sequence is that of Parvalbumin alpha (Pvalb) from Rattus norvegicus (Rat).